The sequence spans 86 residues: MVSRGCSITVLFRFLIVLLVIQVHFENTKAARHAPVVSWSPPEPPKDDFVWYHKINRFKNIEQDAFRPTHQGPSQGIGHKNPPGAP.

The signal sequence occupies residues 1 to 30 (MVSRGCSITVLFRFLIVLLVIQVHFENTKA). A propeptide spanning residues 31-64 (ARHAPVVSWSPPEPPKDDFVWYHKINRFKNIEQD) is cleaved from the precursor. The tract at residues 63-86 (QDAFRPTHQGPSQGIGHKNPPGAP) is disordered. Hydroxyproline occurs at positions 68 and 73. The propeptide occupies 80 to 86 (KNPPGAP).

Belongs to the C-terminally encoded plant signaling peptide (CEP) family. In terms of assembly, interacts with CEP receptors (e.g. CEPR1 and CEPR2). Post-translationally, the mature small signaling peptide is generated by proteolytic processing of the longer precursor. Expressed at low levels in flowers. Present in lateral roots, shoot apical meristem (SAM), flowers and siliques.

It localises to the secreted. The protein resides in the extracellular space. The protein localises to the apoplast. Its function is as follows. Extracellular signaling peptide that represses primary root growth rate. Promotes shoot growth and modulates leaf morphology. Regulates systemic nitrogen (N)-demand signaling. Mediates up-regulation of genes involved in N uptake and assimilation pathways. The protein is Precursor of CEP4 of Arabidopsis thaliana (Mouse-ear cress).